Here is a 389-residue protein sequence, read N- to C-terminus: Cytochrome f (389 aa).

A signal peptide spans 1–42 (MTTFFISKVNGPVNKSLIWLKIHIYEFFLLKFMLLFPPTVCS). 4 residues coordinate heme: Tyr-105, Cys-125, Cys-128, and His-129. The helical transmembrane segment at 355 to 375 (LQALIVFFIFVILTQLFLVLK) threads the bilayer.

This sequence belongs to the cytochrome f family. The 4 large subunits of the cytochrome b6-f complex are cytochrome b6, subunit IV (17 kDa polypeptide, petD), cytochrome f and the Rieske protein, while the 4 small subunits are PetG, PetL, PetM and PetN. The complex functions as a dimer. The cofactor is heme.

The protein localises to the plastid. It localises to the chloroplast thylakoid membrane. In terms of biological role, component of the cytochrome b6-f complex, which mediates electron transfer between photosystem II (PSII) and photosystem I (PSI), cyclic electron flow around PSI, and state transitions. This is Cytochrome f from Pleurastrum terricola (Filamentous green alga).